The following is a 147-amino-acid chain: Transcriptional regulator MraZ (147 aa).

SpoVT-AbrB domains lie at 5 to 47 (QQLR…SEKE) and 76 to 123 (TFEI…SKSK).

This sequence belongs to the MraZ family. As to quaternary structure, forms oligomers.

It is found in the cytoplasm. Its subcellular location is the nucleoid. The protein is Transcriptional regulator MraZ of Mycoplasmopsis synoviae (strain 53) (Mycoplasma synoviae).